A 489-amino-acid chain; its full sequence is Rhamnulokinase (489 aa).

13–17 (ASSGR) lines the ATP pocket. A disulfide bond links Cys-68 and Cys-222. Substrate contacts are provided by residues Gly-83 and 236 to 238 (HDT). The Proton acceptor role is filled by Asp-237. Thr-259 is a binding site for ATP. Asn-296 is a substrate binding site. Gln-304 provides a ligand contact to ATP. A disulfide bridge connects residues Cys-353 and Cys-370. Gly-402 contacts ATP. Cysteines 413 and 417 form a disulfide.

The protein belongs to the rhamnulokinase family. Monomer. It depends on Mg(2+) as a cofactor.

The catalysed reaction is L-rhamnulose + ATP = L-rhamnulose 1-phosphate + ADP + H(+). The protein operates within carbohydrate degradation; L-rhamnose degradation; glycerone phosphate from L-rhamnose: step 2/3. In terms of biological role, involved in the catabolism of L-rhamnose (6-deoxy-L-mannose). Catalyzes the transfer of the gamma-phosphate group from ATP to the 1-hydroxyl group of L-rhamnulose to yield L-rhamnulose 1-phosphate. The polypeptide is Rhamnulokinase (Escherichia coli (strain K12 / DH10B)).